Here is a 354-residue protein sequence, read N- to C-terminus: Putative Xaa-Pro aminopeptidase (354 aa).

Mn(2+) contacts are provided by Asp-213, Asp-224, His-290, Glu-319, and Glu-333.

This sequence belongs to the peptidase M24B family. The cofactor is Mn(2+).

It catalyses the reaction Release of any N-terminal amino acid, including proline, that is linked to proline, even from a dipeptide or tripeptide.. This chain is Putative Xaa-Pro aminopeptidase (pepP), found in Mycoplasma genitalium (strain ATCC 33530 / DSM 19775 / NCTC 10195 / G37) (Mycoplasmoides genitalium).